A 143-amino-acid chain; its full sequence is Large ribosomal subunit protein uL13 (143 aa).

Belongs to the universal ribosomal protein uL13 family. In terms of assembly, part of the 50S ribosomal subunit.

Its function is as follows. This protein is one of the early assembly proteins of the 50S ribosomal subunit, although it is not seen to bind rRNA by itself. It is important during the early stages of 50S assembly. This chain is Large ribosomal subunit protein uL13, found in Prochlorococcus marinus (strain MIT 9301).